A 320-amino-acid polypeptide reads, in one-letter code: Malate dehydrogenase (320 aa).

NAD(+) is bound by residues 10–15 and Asp34; that span reads GSGMIG. Positions 83 and 89 each coordinate substrate. NAD(+) is bound by residues Asn96 and 119 to 121; that span reads ITN. Substrate contacts are provided by Asn121 and Arg152. The active-site Proton acceptor is His176.

The protein belongs to the LDH/MDH superfamily. MDH type 3 family.

It catalyses the reaction (S)-malate + NAD(+) = oxaloacetate + NADH + H(+). Functionally, catalyzes the reversible oxidation of malate to oxaloacetate. This chain is Malate dehydrogenase, found in Agrobacterium fabrum (strain C58 / ATCC 33970) (Agrobacterium tumefaciens (strain C58)).